Reading from the N-terminus, the 224-residue chain is Putative O-methyltransferase MMAR_4217 (224 aa).

A compositionally biased stretch (polar residues) spans 1-11 (MHGTDSSSDTP). A disordered region spans residues 1-20 (MHGTDSSSDTPGQPAPSRAE). S-adenosyl-L-methionine contacts are provided by residues Val51, Glu73, 75–76 (GT), Ser81, Asp99, and Ile100. Asp147 contacts substrate. Asp149 serves as a coordination point for S-adenosyl-L-methionine.

This sequence belongs to the class I-like SAM-binding methyltransferase superfamily. Cation-dependent O-methyltransferase family.

The chain is Putative O-methyltransferase MMAR_4217 from Mycobacterium marinum (strain ATCC BAA-535 / M).